The following is a 101-amino-acid chain: Large ribosomal subunit protein uL23 (101 aa).

Belongs to the universal ribosomal protein uL23 family. In terms of assembly, part of the 50S ribosomal subunit. Contacts protein L29, and trigger factor when it is bound to the ribosome.

One of the early assembly proteins it binds 23S rRNA. One of the proteins that surrounds the polypeptide exit tunnel on the outside of the ribosome. Forms the main docking site for trigger factor binding to the ribosome. This is Large ribosomal subunit protein uL23 from Corynebacterium glutamicum (strain R).